We begin with the raw amino-acid sequence, 436 residues long: UDP-N-acetylmuramate--L-alanine ligase (436 aa).

108–114 contributes to the ATP binding site; the sequence is GAHGKTS.

This sequence belongs to the MurCDEF family.

It is found in the cytoplasm. It catalyses the reaction UDP-N-acetyl-alpha-D-muramate + L-alanine + ATP = UDP-N-acetyl-alpha-D-muramoyl-L-alanine + ADP + phosphate + H(+). The protein operates within cell wall biogenesis; peptidoglycan biosynthesis. Its function is as follows. Cell wall formation. The protein is UDP-N-acetylmuramate--L-alanine ligase of Bacillus cereus (strain ZK / E33L).